We begin with the raw amino-acid sequence, 239 residues long: tRNA (guanine-N(7)-)-methyltransferase (239 aa).

Residues Glu-69, Glu-94, Asp-121, and Asp-144 each coordinate S-adenosyl-L-methionine. Asp-144 is a catalytic residue. Residues Lys-148, Asp-180, and 217–220 (TKFE) each bind substrate.

It belongs to the class I-like SAM-binding methyltransferase superfamily. TrmB family.

It carries out the reaction guanosine(46) in tRNA + S-adenosyl-L-methionine = N(7)-methylguanosine(46) in tRNA + S-adenosyl-L-homocysteine. The protein operates within tRNA modification; N(7)-methylguanine-tRNA biosynthesis. Its function is as follows. Catalyzes the formation of N(7)-methylguanine at position 46 (m7G46) in tRNA. This chain is tRNA (guanine-N(7)-)-methyltransferase, found in Alcanivorax borkumensis (strain ATCC 700651 / DSM 11573 / NCIMB 13689 / SK2).